The chain runs to 313 residues: Methionyl-tRNA formyltransferase (313 aa).

S110–P113 provides a ligand contact to (6S)-5,6,7,8-tetrahydrofolate.

The protein belongs to the Fmt family.

It carries out the reaction L-methionyl-tRNA(fMet) + (6R)-10-formyltetrahydrofolate = N-formyl-L-methionyl-tRNA(fMet) + (6S)-5,6,7,8-tetrahydrofolate + H(+). Its function is as follows. Attaches a formyl group to the free amino group of methionyl-tRNA(fMet). The formyl group appears to play a dual role in the initiator identity of N-formylmethionyl-tRNA by promoting its recognition by IF2 and preventing the misappropriation of this tRNA by the elongation apparatus. The chain is Methionyl-tRNA formyltransferase from Lysinibacillus sphaericus (strain C3-41).